The primary structure comprises 167 residues: uncharacterized protein (167 aa).

This is an uncharacterized protein from Acanthamoeba polyphaga (Amoeba).